Here is a 424-residue protein sequence, read N- to C-terminus: 3-isopropylmalate dehydratase large subunit (424 aa).

The [4Fe-4S] cluster site is built by cysteine 299, cysteine 359, and cysteine 362.

This sequence belongs to the aconitase/IPM isomerase family. LeuC type 2 subfamily. As to quaternary structure, heterodimer of LeuC and LeuD. The cofactor is [4Fe-4S] cluster.

The catalysed reaction is (2R,3S)-3-isopropylmalate = (2S)-2-isopropylmalate. Its pathway is amino-acid biosynthesis; L-leucine biosynthesis; L-leucine from 3-methyl-2-oxobutanoate: step 2/4. Functionally, catalyzes the isomerization between 2-isopropylmalate and 3-isopropylmalate, via the formation of 2-isopropylmaleate. The polypeptide is 3-isopropylmalate dehydratase large subunit (Hydrogenobaculum sp. (strain Y04AAS1)).